Reading from the N-terminus, the 234-residue chain is tRNA1(Val) (adenine(37)-N6)-methyltransferase (234 aa).

This sequence belongs to the methyltransferase superfamily. tRNA (adenine-N(6)-)-methyltransferase family.

It localises to the cytoplasm. It catalyses the reaction adenosine(37) in tRNA1(Val) + S-adenosyl-L-methionine = N(6)-methyladenosine(37) in tRNA1(Val) + S-adenosyl-L-homocysteine + H(+). In terms of biological role, specifically methylates the adenine in position 37 of tRNA(1)(Val) (anticodon cmo5UAC). The chain is tRNA1(Val) (adenine(37)-N6)-methyltransferase from Flavobacterium psychrophilum (strain ATCC 49511 / DSM 21280 / CIP 103535 / JIP02/86).